A 188-amino-acid chain; its full sequence is Large ribosomal subunit protein eL18 (188 aa).

Lys119 is covalently cross-linked (Glycyl lysine isopeptide (Lys-Gly) (interchain with G-Cter in SUMO2)). Phosphoserine is present on Ser130. Residues Arg150–Asn188 are disordered. Position 158 is a phosphothreonine (Thr158). Basic residues-rich tracts occupy residues Ser161 to Gly171 and Arg178 to Asn188. A Glycyl lysine isopeptide (Lys-Gly) (interchain with G-Cter in SUMO2) cross-link involves residue Lys164.

Belongs to the eukaryotic ribosomal protein eL18 family. In terms of assembly, component of the large ribosomal subunit.

It localises to the cytoplasm. The protein localises to the cytosol. The protein resides in the rough endoplasmic reticulum. Its function is as follows. Component of the large ribosomal subunit. The ribosome is a large ribonucleoprotein complex responsible for the synthesis of proteins in the cell. The polypeptide is Large ribosomal subunit protein eL18 (Rpl18) (Rattus norvegicus (Rat)).